We begin with the raw amino-acid sequence, 146 residues long: MKIYVDADACPVKDVIIFEATKAEIPVTLVTSFSHYSNAEQPKGVETIYVDSGADAADYRIMQLAQKEDLIITQDYGLASLALAKGCIVLHHKGYKYTNDNIEQLLQTRYLSAMVRKSGKRTKGPKPFTAEDKEKFRALFKSFIAR.

This sequence belongs to the UPF0178 family.

The protein is UPF0178 protein BCAH187_A3092 of Bacillus cereus (strain AH187).